The chain runs to 208 residues: Holliday junction branch migration complex subunit RuvA (208 aa).

The segment at 1-63 (MIGMLTGRVE…QDSVTLYGFL (63 aa)) is domain I. The interval 64–142 (DRDSKRVFLQ…LNQSDDASAG (79 aa)) is domain II. A flexible linker region spans residues 143–151 (NAPYQPTVD). The segment at 151 to 208 (DAGVEQVVEGLVSLGWRQQDAQRAVNEACAENDVPMPLASDDAPRVLRLALARMDRGR) is domain III.

This sequence belongs to the RuvA family. As to quaternary structure, homotetramer. Forms an RuvA(8)-RuvB(12)-Holliday junction (HJ) complex. HJ DNA is sandwiched between 2 RuvA tetramers; dsDNA enters through RuvA and exits via RuvB. An RuvB hexamer assembles on each DNA strand where it exits the tetramer. Each RuvB hexamer is contacted by two RuvA subunits (via domain III) on 2 adjacent RuvB subunits; this complex drives branch migration. In the full resolvosome a probable DNA-RuvA(4)-RuvB(12)-RuvC(2) complex forms which resolves the HJ.

The protein resides in the cytoplasm. Its function is as follows. The RuvA-RuvB-RuvC complex processes Holliday junction (HJ) DNA during genetic recombination and DNA repair, while the RuvA-RuvB complex plays an important role in the rescue of blocked DNA replication forks via replication fork reversal (RFR). RuvA specifically binds to HJ cruciform DNA, conferring on it an open structure. The RuvB hexamer acts as an ATP-dependent pump, pulling dsDNA into and through the RuvAB complex. HJ branch migration allows RuvC to scan DNA until it finds its consensus sequence, where it cleaves and resolves the cruciform DNA. The chain is Holliday junction branch migration complex subunit RuvA from Bifidobacterium longum subsp. infantis (strain ATCC 15697 / DSM 20088 / JCM 1222 / NCTC 11817 / S12).